The following is a 396-amino-acid chain: Flavohemoprotein (396 aa).

Residues 1–136 (MLDAQTIATV…LANVFINREA (136 aa)) enclose the Globin domain. H85 is a heme b binding site. Catalysis depends on charge relay system residues Y95 and E135. Positions 147 to 396 (GGWEGTRDFR…YECFGPHKVL (250 aa)) are reductase. An FAD-binding FR-type domain is found at 150–255 (EGTRDFRIVA…VAPAGDFFMA (106 aa)). Residues Y188 and 204 to 207 (RQYS) each bind FAD. 268–273 (GVGQTP) contacts NADP(+). Position 389–392 (389–392 (CFGP)) interacts with FAD.

Belongs to the globin family. Two-domain flavohemoproteins subfamily. The protein in the C-terminal section; belongs to the flavoprotein pyridine nucleotide cytochrome reductase family. Requires heme b as cofactor. FAD serves as cofactor.

It catalyses the reaction 2 nitric oxide + NADPH + 2 O2 = 2 nitrate + NADP(+) + H(+). The catalysed reaction is 2 nitric oxide + NADH + 2 O2 = 2 nitrate + NAD(+) + H(+). Functionally, is involved in NO detoxification in an aerobic process, termed nitric oxide dioxygenase (NOD) reaction that utilizes O(2) and NAD(P)H to convert NO to nitrate, which protects the bacterium from various noxious nitrogen compounds. Therefore, plays a central role in the inducible response to nitrosative stress. The sequence is that of Flavohemoprotein from Escherichia coli O6:H1 (strain CFT073 / ATCC 700928 / UPEC).